A 179-amino-acid polypeptide reads, in one-letter code: Ribosome maturation factor RimM (179 aa).

A PRC barrel domain is found at 97-170 (DGELSWNFFV…LITVELPEGL (74 aa)).

This sequence belongs to the RimM family. As to quaternary structure, binds ribosomal protein uS19.

It is found in the cytoplasm. Its function is as follows. An accessory protein needed during the final step in the assembly of 30S ribosomal subunit, possibly for assembly of the head region. Essential for efficient processing of 16S rRNA. May be needed both before and after RbfA during the maturation of 16S rRNA. It has affinity for free ribosomal 30S subunits but not for 70S ribosomes. This is Ribosome maturation factor RimM from Bacteroides thetaiotaomicron (strain ATCC 29148 / DSM 2079 / JCM 5827 / CCUG 10774 / NCTC 10582 / VPI-5482 / E50).